We begin with the raw amino-acid sequence, 253 residues long: Probable transcriptional regulatory protein Synpcc7942_1017 (253 aa).

It belongs to the TACO1 family.

It localises to the cytoplasm. The polypeptide is Probable transcriptional regulatory protein Synpcc7942_1017 (Synechococcus elongatus (strain ATCC 33912 / PCC 7942 / FACHB-805) (Anacystis nidulans R2)).